The chain runs to 413 residues: Alpha-1-antitrypsin-like protein GS55-MS (413 aa).

Positions 1–24 (MPSSISWGLLLLAGLSCLVAGSLA) are cleaved as a signal peptide. N-linked (GlcNAc...) asparagine glycans are attached at residues N65, N102, and N266. An RCL region spans residues 368–387 (GATFLEMMPMSLPPEVKFDK).

Belongs to the serpin family.

It is found in the secreted. Inhibitor of serine proteases. Its primary target is elastase, but it also has a moderate affinity for plasmin and thrombin. The protein is Alpha-1-antitrypsin-like protein GS55-MS of Ictidomys tridecemlineatus (Thirteen-lined ground squirrel).